Consider the following 248-residue polypeptide: Chitin deacetylase (248 aa).

An N-terminal signal peptide occupies residues 1–26; sequence MHFSTLFGAAATAALAGSTNASPLAR. Disulfide bonds link Cys38/Cys237 and Cys148/Cys152. The 191-residue stretch at 42 to 232 folds into the NodB homology domain; it reads GLVALTYDDG…TLKSKGYRAV (191 aa). Catalysis depends on Asp49, which acts as the Proton acceptor. Residue Asp49 participates in acetate binding. Co(2+) contacts are provided by Asp50, His104, and His108. Tyr145 contacts acetate. The active-site Proton donor is His206.

Belongs to the polysaccharide deacetylase family. As to quaternary structure, monomer. Co(2+) serves as cofactor. N-glycosylated.

Its subcellular location is the secreted. The enzyme catalyses [(1-&gt;4)-N-acetyl-beta-D-glucosaminyl](n) + n H2O = chitosan + n acetate. Hydrolyzes the N-acetamido groups of N-acetyl-D-glucosamine polymers in chitin to form chitosan and acetate. May play a role in evasion of the host immune response; plant chitinases liberate chitin molecules from the fungal cell wall which act as elicitors of the plant immune response, deacetylation of the liberated chitin neutralizes elicitor activity. The protein is Chitin deacetylase of Colletotrichum lindemuthianum (Bean anthracnose fungus).